The primary structure comprises 345 residues: BAG family molecular chaperone regulator 1 (345 aa).

The segment at 1 to 137 (MAQRGGARRP…STRSEEVTRE (137 aa)) is disordered. Residues 68–80 (RRPRMKKKTRRRS) are compositionally biased toward basic residues. Basic and acidic residues predominate over residues 81–91 (TRSEELTRSEE). The span at 95 to 114 (SEEATWSEEATQSEEATQGE) shows a compositional bias: low complexity. Tandem repeats lie at residues 96–101 (EEATWS), 102–107 (EEATQS), 108–113 (EEATQG), 114–119 (EEMNRS), 120–125 (QEVTRD), 126–131 (EESTRS), and 132–137 (EEVTRE). Positions 96 to 137 (EEATWSEEATQSEEATQGEEMNRSQEVTRDEESTRSEEVTRE) are 7 X 6 AA tandem repeat of E-E-X(4). Residues 115–137 (EMNRSQEVTRDEESTRSEEVTRE) show a composition bias toward basic and acidic residues. In terms of domain architecture, Ubiquitin-like spans 144-224 (LTVTVTHSNE…VMLIGKKNSP (81 aa)). Residues 172–219 (DLAQVVEEVIGVPQSFQKLIFKGKSLKEMETPLSALGIQDGCRVMLIG) form an interaction with HSPA8 region. The segment at 216 to 345 (MLIGKKNSPQ…LQSTNFALAE (130 aa)) is interaction with PPP1R15A. The residue at position 223 (Ser-223) is a Phosphoserine. The region spanning 246-326 (QLEELNKELT…AFLAECDTVE (81 aa)) is the BAG domain.

As to quaternary structure, homodimer. Forms a heteromeric complex with HSP70/HSC70. Binds to the ATPase domain of HSP/HSC70 chaperones. Isoform 1, isoform 3 and isoform 4 but not isoform 2 interact with HSPA8/HSC70. Interacts with NR3C1. Interacts with the N-terminal region of MAPRE2. Interacts with PPP1R15A. Interacts with BCL2 in an ATP-dependent manner. Isoform 2 does not interact with BCL2. Interacts with SIAH1. Interacts with HSPA8 (via NBD). Interacts with HSPA1A (via NBD) and HSPA1B (via NBD). Interacts with SIAH2. Interacts with ESR1; the interaction is promoted in the absence of estradiol (17-beta-estradiol/E2). In terms of processing, ubiquitinated; mediated by SIAH1 or SIAH2 and leading to its subsequent proteasomal degradation. Isoform 4 is the most abundantly expressed isoform. It is ubiquitously expressed throughout most tissues, except the liver, colon, breast and uterine myometrium. Isoform 1 is expressed in the ovary and testis. Isoform 4 is expressed in several types of tumor cell lines, and at consistently high levels in leukemia and lymphoma cell lines. Isoform 1 is expressed in the prostate, breast and leukemia cell lines. Isoform 3 is the least abundant isoform in tumor cell lines (at protein level).

Its subcellular location is the nucleus. It localises to the cytoplasm. Co-chaperone for HSP70 and HSC70 chaperone proteins. Acts as a nucleotide-exchange factor (NEF) promoting the release of ADP from the HSP70 and HSC70 proteins thereby triggering client/substrate protein release. Nucleotide release is mediated via its binding to the nucleotide-binding domain (NBD) of HSPA8/HSC70 where as the substrate release is mediated via its binding to the substrate-binding domain (SBD) of HSPA8/HSC70. Inhibits the pro-apoptotic function of PPP1R15A, and has anti-apoptotic activity. Markedly increases the anti-cell death function of BCL2 induced by various stimuli. Involved in the STUB1-mediated proteasomal degradation of ESR1 in response to age-related circulating estradiol (17-beta-estradiol/E2) decline, thereby promotes neuronal apoptosis in response to ischemic reperfusion injury. The protein is BAG family molecular chaperone regulator 1 (BAG1) of Homo sapiens (Human).